Consider the following 332-residue polypeptide: Aquaporin-7-1 (332 aa).

Over 1–66 (MSGQHQITEQ…RHAIRMPMAE (66 aa)) the chain is Cytoplasmic. The helical transmembrane segment at 67 to 87 (FFGVALLIIFGAGSACQVVLS) threads the bilayer. The Extracellular segment spans residues 88-100 (TNPNVASSDRGSF). The chain crosses the membrane as a helical span at residues 101–121 (LSINLGWAIGIAMGAWVSGGI). The Cytoplasmic portion of the chain corresponds to 122 to 144 (SGGHINPAITIAMATYRGFPWRR). The NPA 1 signature appears at 127 to 129 (NPA). A helical membrane pass occupies residues 145 to 165 (VPSYIFAQVLGGVVGAALVYA). The Extracellular portion of the chain corresponds to 166 to 199 (NYIHAIDIFEGGRHVRTQATASLFATYALPYMTQ). A helical transmembrane segment spans residues 200–220 (VSCFFSEFLATAVLSMMVLAL). Topologically, residues 221–230 (TDNRNGAPTN) are cytoplasmic. A helical membrane pass occupies residues 231-251 (GLLPFALFVLFIGLGASLGME). Residues 252–283 (TAYALNPARDFGPRLFLAMSGYGKALFNYRSQ) are Extracellular-facing. The NPA 2 motif lies at 257–259 (NPA). Residues 284 to 304 (YWLWAPIIAPVLGAQAGGLLY) form a helical membrane-spanning segment. The Cytoplasmic portion of the chain corresponds to 305 to 332 (DTFLYDGDNSPIKWRRASSQECQLAEVV).

The protein belongs to the MIP/aquaporin (TC 1.A.8) family.

The protein localises to the membrane. The catalysed reaction is H2O(in) = H2O(out). In terms of biological role, water channel required to facilitate the transport of water across membranes. Does not mediate the transport carbon dioxide across the membrane. This is Aquaporin-7-1 from Laccaria bicolor (Bicoloured deceiver).